The primary structure comprises 542 residues: 1,3-beta-glucanosyltransferase gas1 (542 aa).

An N-terminal signal peptide occupies residues 1-19; the sequence is MKFSILSLAVAGLVGLAKA. The N-linked (GlcNAc...) asparagine glycan is linked to asparagine 35. Cysteine 70 and cysteine 99 are joined by a disulfide. Tyrosine 88 serves as a coordination point for (1,3-beta-D-glucosyl)n. Asparagine 91 carries N-linked (GlcNAc...) asparagine glycosylation. Asparagine 156 and glutamate 157 together coordinate (1,3-beta-D-glucosyl)n. Glutamate 157 acts as the Proton donor in catalysis. N-linked (GlcNAc...) asparagine glycosylation is present at asparagine 161. (1,3-beta-D-glucosyl)n-binding residues include aspartate 198 and arginine 203. 5 cysteine pairs are disulfide-bonded: cysteine 212–cysteine 345, cysteine 230–cysteine 261, cysteine 367–cysteine 419, cysteine 376–cysteine 439, and cysteine 395–cysteine 400. Residue asparagine 249 is glycosylated (N-linked (GlcNAc...) asparagine). Glutamate 258 serves as the catalytic Nucleophile. An N-linked (GlcNAc...) asparagine glycan is attached at asparagine 279. Position 290 (tyrosine 290) interacts with (1,3-beta-D-glucosyl)n. N-linked (GlcNAc...) asparagine glycosylation is found at asparagine 406, asparagine 484, asparagine 502, and asparagine 509. The disordered stretch occupies residues 490–515; sequence MSTSYTSGSGSSNSSGSSSNSSSKSS. A lipid anchor (GPI-anchor amidated serine) is attached at serine 516. The propeptide at 517–542 is removed in mature form; sequence GASSYNLNMVITFLSVVIGGTAVLFI.

This sequence belongs to the glycosyl hydrolase 72 family. Post-translationally, the GPI-anchor is attached to the protein in the endoplasmic reticulum and serves to target the protein to the cell surface. There, the glucosamine-inositol phospholipid moiety is cleaved off and the GPI-modified mannoprotein is covalently attached via its lipidless GPI glycan remnant to the 1,6-beta-glucan of the outer cell wall layer.

The protein localises to the secreted. Its subcellular location is the cell wall. The protein resides in the membrane. In terms of biological role, splits internally a 1,3-beta-glucan molecule and transfers the newly generated reducing end (the donor) to the non-reducing end of another 1,3-beta-glucan molecule (the acceptor) forming a 1,3-beta linkage, resulting in the elongation of 1,3-beta-glucan chains in the cell wall. The chain is 1,3-beta-glucanosyltransferase gas1 (gas1) from Schizosaccharomyces pombe (strain 972 / ATCC 24843) (Fission yeast).